The primary structure comprises 181 residues: MQTSAQKVIQDLTNRVQAEKEELEQLERERDLWKYNAQMNDKEALRGNERKKNIMKKGGPLCYFCNKNHVPSLCRTYPDGISRQKSLENQGKCIKCLKIGHQNGDNFCEKHHIVCRTCQQSHVKAVCPILYPKKDTPPKILRARRRSLIRAQKKKDFQEPENKHEQLTSTKAPCQENWSDF.

The tract at residues 151 to 181 is disordered; sequence AQKKKDFQEPENKHEQLTSTKAPCQENWSDF. Basic and acidic residues predominate over residues 154–166; sequence KKDFQEPENKHEQ. A compositionally biased stretch (polar residues) spans 167–181; it reads LTSTKAPCQENWSDF.

This is an uncharacterized protein from Caenorhabditis elegans.